Reading from the N-terminus, the 101-residue chain is Protein Tat (101 aa).

Residues 1-20 (MDPVDPNIEPWNQPGSQPKT) form a disordered region. Residues 1–24 (MDPVDPNIEPWNQPGSQPKTACNQ) are interaction with human CREBBP. The interval 1 to 48 (MDPVDPNIEPWNQPGSQPKTACNQCYCKRCCYHCQICFLKKGLGISNG) is transactivation. 3 residues coordinate Zn(2+): C22, C25, and C27. The segment at 22 to 37 (CNQCYCKRCCYHCQIC) is cysteine-rich. The residue at position 28 (K28) is an N6-acetyllysine; by host PCAF. Zn(2+) is bound by residues C30, H33, C34, and C37. The segment at 38–48 (FLKKGLGISNG) is core. The disordered stretch occupies residues 45–101 (ISNGRKKRRPRRTTPYNSENHQDPLRKQPLSQPRGEQTDPKESKKKVESKTKTDQFD). Residues 49–57 (RKKRRPRRT) carry the Nuclear localization signal, RNA-binding (TAR), and protein transduction motif. The segment at 49 to 86 (RKKRRPRRTTPYNSENHQDPLRKQPLSQPRGEQTDPKE) is interaction with the host capping enzyme RNGTT. Residues K50 and K51 each carry the N6-acetyllysine; by host EP300 and GCN5L2 modification. An asymmetric dimethylarginine; by host PRMT6 mark is found at R52 and R53. A Glycyl lysine isopeptide (Lys-Gly) (interchain with G-Cter in ubiquitin) cross-link involves residue K71. Positions 80–101 (EQTDPKESKKKVESKTKTDQFD) are enriched in basic and acidic residues.

It belongs to the lentiviruses Tat family. In terms of assembly, interacts with host CCNT1. Associates with the P-TEFb complex composed at least of Tat, P-TEFb (CDK9 and CCNT1), TAR RNA, RNA Pol II. Recruits the HATs CREBBP, TAF1/TFIID, EP300, PCAF and GCN5L2. Interacts with host KAT5/Tip60; this interaction targets the latter to degradation. Interacts with the host deacetylase SIRT1. Interacts with host capping enzyme RNGTT; this interaction stimulates RNGTT. Binds to host KDR, and to the host integrins ITGAV/ITGB3 and ITGA5/ITGB1. Interacts with host KPNB1/importin beta-1 without previous binding to KPNA1/importin alpha-1. Interacts with EIF2AK2. Interacts with host nucleosome assembly protein NAP1L1; this interaction may be required for the transport of Tat within the nucleus, since the two proteins interact at the nuclear rim. Interacts with host C1QBP/SF2P32; this interaction involves lysine-acetylated Tat. Interacts with the host chemokine receptors CCR2, CCR3 and CXCR4. Interacts with host DPP4/CD26; this interaction may trigger an anti-proliferative effect. Interacts with host LDLR. Interacts with the host extracellular matrix metalloproteinase MMP1. Interacts with host PRMT6; this interaction mediates Tat's methylation. Interacts with, and is ubiquitinated by MDM2/Hdm2. Interacts with host PSMC3 and HTATIP2. Interacts with STAB1; this interaction may overcome SATB1-mediated repression of IL2 and IL2RA (interleukin) in T cells by binding to the same domain than HDAC1. Interacts (when acetylated) with human CDK13, thereby increasing HIV-1 mRNA splicing and promoting the production of the doubly spliced HIV-1 protein Nef. Interacts with host TBP; this interaction modulates the activity of transcriptional pre-initiation complex. Interacts with host RELA. Interacts with host PLSCR1; this interaction negatively regulates Tat transactivation activity by altering its subcellular distribution. Asymmetrical arginine methylation by host PRMT6 seems to diminish the transactivation capacity of Tat and affects the interaction with host CCNT1. In terms of processing, acetylation by EP300, CREBBP, GCN5L2/GCN5 and PCAF regulates the transactivation activity of Tat. EP300-mediated acetylation of Lys-50 promotes dissociation of Tat from the TAR RNA through the competitive binding to PCAF's bromodomain. In addition, the non-acetylated Tat's N-terminus can also interact with PCAF. PCAF-mediated acetylation of Lys-28 enhances Tat's binding to CCNT1. Lys-50 is deacetylated by SIRT1. Post-translationally, polyubiquitination by host MDM2 does not target Tat to degradation, but activates its transactivation function and fosters interaction with CCNT1 and TAR RNA. Phosphorylated by EIF2AK2 on serine and threonine residues adjacent to the basic region important for TAR RNA binding and function. Phosphorylation of Tat by EIF2AK2 is dependent on the prior activation of EIF2AK2 by dsRNA.

Its subcellular location is the host nucleus. It localises to the host nucleolus. It is found in the host cytoplasm. The protein resides in the secreted. Transcriptional activator that increases RNA Pol II processivity, thereby increasing the level of full-length viral transcripts. Recognizes a hairpin structure at the 5'-LTR of the nascent viral mRNAs referred to as the transactivation responsive RNA element (TAR) and recruits the cyclin T1-CDK9 complex (P-TEFb complex) that will in turn hyperphosphorylate the RNA polymerase II to allow efficient elongation. The CDK9 component of P-TEFb and other Tat-activated kinases hyperphosphorylate the C-terminus of RNA Pol II that becomes stabilized and much more processive. Other factors such as HTATSF1/Tat-SF1, SUPT5H/SPT5, and HTATIP2 are also important for Tat's function. Besides its effect on RNA Pol II processivity, Tat induces chromatin remodeling of proviral genes by recruiting the histone acetyltransferases (HATs) CREBBP, EP300 and PCAF to the chromatin. This also contributes to the increase in proviral transcription rate, especially when the provirus integrates in transcriptionally silent region of the host genome. To ensure maximal activation of the LTR, Tat mediates nuclear translocation of NF-kappa-B by interacting with host RELA. Through its interaction with host TBP, Tat may also modulate transcription initiation. Tat can reactivate a latently infected cell by penetrating in it and transactivating its LTR promoter. In the cytoplasm, Tat is thought to act as a translational activator of HIV-1 mRNAs. Functionally, extracellular circulating Tat can be endocytosed by surrounding uninfected cells via the binding to several surface receptors such as CD26, CXCR4, heparan sulfate proteoglycans (HSPG) or LDLR. Neurons are rarely infected, but they internalize Tat via their LDLR. Through its interaction with nuclear HATs, Tat is potentially able to control the acetylation-dependent cellular gene expression. Modulates the expression of many cellular genes involved in cell survival, proliferation or in coding for cytokines or cytokine receptors. Tat plays a role in T-cell and neurons apoptosis. Tat induced neurotoxicity and apoptosis probably contribute to neuroAIDS. Circulating Tat also acts as a chemokine-like and/or growth factor-like molecule that binds to specific receptors on the surface of the cells, affecting many cellular pathways. In the vascular system, Tat binds to ITGAV/ITGB3 and ITGA5/ITGB1 integrins dimers at the surface of endothelial cells and competes with bFGF for heparin-binding sites, leading to an excess of soluble bFGF. The protein is Protein Tat of Homo sapiens (Human).